Consider the following 414-residue polypeptide: Putative competence-damage inducible protein (414 aa).

This sequence belongs to the CinA family.

The protein is Putative competence-damage inducible protein of Listeria monocytogenes serotype 4b (strain CLIP80459).